The primary structure comprises 460 residues: Chromosomal replication initiator protein DnaA (460 aa).

Residues 1–91 (MNLTSPKVST…SLWQSEDKSI (91 aa)) are domain I, interacts with DnaA modulators. The interval 91–122 (IRSIDIQVIEERNSNFNVILKNREESNHNLGS) is domain II. Positions 123–342 (PLDPRFTFDN…GALNKVTHTS (220 aa)) are domain III, AAA+ region. ATP contacts are provided by G169, G171, K172, and T173. The interval 343–460 (LIGRSMTVES…EINRLKKMFK (118 aa)) is domain IV, binds dsDNA.

Belongs to the DnaA family. Oligomerizes as a right-handed, spiral filament on DNA at oriC.

It is found in the cytoplasm. Its function is as follows. Plays an essential role in the initiation and regulation of chromosomal replication. ATP-DnaA binds to the origin of replication (oriC) to initiate formation of the DNA replication initiation complex once per cell cycle. Binds the DnaA box (a 9 base pair repeat at the origin) and separates the double-stranded (ds)DNA. Forms a right-handed helical filament on oriC DNA; dsDNA binds to the exterior of the filament while single-stranded (ss)DNA is stabiized in the filament's interior. The ATP-DnaA-oriC complex binds and stabilizes one strand of the AT-rich DNA unwinding element (DUE), permitting loading of DNA polymerase. After initiation quickly degrades to an ADP-DnaA complex that is not apt for DNA replication. Binds acidic phospholipids. The polypeptide is Chromosomal replication initiator protein DnaA (Wolbachia pipientis wMel).